The sequence spans 372 residues: Bifunctional coenzyme PQQ synthesis protein C/D (372 aa).

Residues 1 to 267 form a pqqC region; it reads MTAQFPPPVP…VAETNSAEDS (267 aa). Residues 260 to 288 are disordered; the sequence is ETNSAEDSPAAAASPAATTAEPTAFSGSD. The span at 264–283 shows a compositional bias: low complexity; sequence AEDSPAAAASPAATTAEPTA. The linker stretch occupies residues 268–280; it reads PAAAASPAATTAE. Positions 281–372 are pqqD; sequence PTAFSGSDVP…GLAQKRVLER (92 aa).

The protein in the N-terminal section; belongs to the PqqC family. In the C-terminal section; belongs to the PqqD family. As to quaternary structure, monomer. Interacts with PqqE.

The enzyme catalyses 6-(2-amino-2-carboxyethyl)-7,8-dioxo-1,2,3,4,7,8-hexahydroquinoline-2,4-dicarboxylate + 3 O2 = pyrroloquinoline quinone + 2 H2O2 + 2 H2O + H(+). The protein operates within cofactor biosynthesis; pyrroloquinoline quinone biosynthesis. In terms of biological role, the PqqC region is involved in ring cyclization and eight-electron oxidation of 3a-(2-amino-2-carboxyethyl)-4,5-dioxo-4,5,6,7,8,9-hexahydroquinoline-7,9-dicarboxylic-acid to PQQ. Its function is as follows. The PqqD region functions as a PqqA binding domain and presents PqqA to PqqE. In Methylorubrum extorquens (strain ATCC 14718 / DSM 1338 / JCM 2805 / NCIMB 9133 / AM1) (Methylobacterium extorquens), this protein is Bifunctional coenzyme PQQ synthesis protein C/D (pqqCD).